We begin with the raw amino-acid sequence, 398 residues long: Argininosuccinate synthase (398 aa).

8–16 (AYSGGLDTS) contacts ATP. Residue tyrosine 87 coordinates L-citrulline. ATP is bound at residue glycine 117. Positions 119, 123, and 124 each coordinate L-aspartate. Asparagine 123 is an L-citrulline binding site. Residues arginine 127, serine 175, glutamate 259, and tyrosine 271 each contribute to the L-citrulline site.

This sequence belongs to the argininosuccinate synthase family. Type 1 subfamily. Homotetramer.

It localises to the cytoplasm. The enzyme catalyses L-citrulline + L-aspartate + ATP = 2-(N(omega)-L-arginino)succinate + AMP + diphosphate + H(+). It functions in the pathway amino-acid biosynthesis; L-arginine biosynthesis; L-arginine from L-ornithine and carbamoyl phosphate: step 2/3. This Corynebacterium kroppenstedtii (strain DSM 44385 / JCM 11950 / CIP 105744 / CCUG 35717) protein is Argininosuccinate synthase.